The primary structure comprises 141 residues: Large ribosomal subunit protein uL16 (141 aa).

Belongs to the universal ribosomal protein uL16 family. In terms of assembly, part of the 50S ribosomal subunit.

Functionally, binds 23S rRNA and is also seen to make contacts with the A and possibly P site tRNAs. The polypeptide is Large ribosomal subunit protein uL16 (Thermus thermophilus (strain ATCC BAA-163 / DSM 7039 / HB27)).